Here is a 424-residue protein sequence, read N- to C-terminus: Dihydroorotase (424 aa).

2 residues coordinate Zn(2+): His-61 and His-63. Residues 63–65 (HLR) and Asn-95 each bind substrate. Positions 153, 180, and 233 each coordinate Zn(2+). Asn-279 contributes to the substrate binding site. Asp-306 lines the Zn(2+) pocket. The active site involves Asp-306. Residue His-310 coordinates substrate.

The protein belongs to the metallo-dependent hydrolases superfamily. DHOase family. Class I DHOase subfamily. The cofactor is Zn(2+).

It carries out the reaction (S)-dihydroorotate + H2O = N-carbamoyl-L-aspartate + H(+). It functions in the pathway pyrimidine metabolism; UMP biosynthesis via de novo pathway; (S)-dihydroorotate from bicarbonate: step 3/3. Catalyzes the reversible cyclization of carbamoyl aspartate to dihydroorotate. This is Dihydroorotase from Citrifermentans bemidjiense (strain ATCC BAA-1014 / DSM 16622 / JCM 12645 / Bem) (Geobacter bemidjiensis).